The chain runs to 425 residues: Argininosuccinate synthase (425 aa).

ATP contacts are provided by residues 7–15 (AYSGGLDTS) and A33. Y84 contributes to the L-citrulline binding site. Position 114 (G114) interacts with ATP. Residues T116, N120, and D121 each coordinate L-aspartate. N120 lines the L-citrulline pocket. Positions 124, 177, 186, 267, and 279 each coordinate L-citrulline.

This sequence belongs to the argininosuccinate synthase family. Type 1 subfamily. As to quaternary structure, homotetramer.

It is found in the cytoplasm. The catalysed reaction is L-citrulline + L-aspartate + ATP = 2-(N(omega)-L-arginino)succinate + AMP + diphosphate + H(+). The protein operates within amino-acid biosynthesis; L-arginine biosynthesis; L-arginine from L-ornithine and carbamoyl phosphate: step 2/3. This is Argininosuccinate synthase from Pseudothermotoga lettingae (strain ATCC BAA-301 / DSM 14385 / NBRC 107922 / TMO) (Thermotoga lettingae).